Here is a 259-residue protein sequence, read N- to C-terminus: Phosphatidylinositol transfer protein 2 (259 aa).

A coiled-coil region spans residues 231 to 259 (LTIEDIRKIEEETKAELAKKLEENKAANK).

The protein belongs to the PtdIns transfer protein family. PI transfer class IIA subfamily.

The protein resides in the cytoplasm. It is found in the golgi apparatus. In terms of biological role, catalyzes the transfer of PtdIns and phosphatidylcholine between membranes. The polypeptide is Phosphatidylinositol transfer protein 2 (pitB) (Dictyostelium discoideum (Social amoeba)).